Here is a 107-residue protein sequence, read N- to C-terminus: Large ribosomal subunit protein P1 (107 aa).

The interval 67 to 107 (GAAPAAAAPAAGGAPAAGAAPKKEEKKEPSEEEDMGFSLFD) is disordered. Positions 69–86 (APAAAAPAAGGAPAAGAA) are enriched in low complexity.

The protein belongs to the eukaryotic ribosomal protein P1/P2 family. P1 and P2 exist as dimers at the large ribosomal subunit.

Plays an important role in the elongation step of protein synthesis. This is Large ribosomal subunit protein P1 from Chlamydomonas reinhardtii (Chlamydomonas smithii).